A 443-amino-acid chain; its full sequence is F-box only protein 39 (443 aa).

One can recognise an F-box domain in the interval 16–61; that stretch reads WATLPDVCLRRVFWWLGDRDRSRAALVCRKWNQMMYSADLWRYRTI.

Directly interacts with SKP1 and CUL1.

Its function is as follows. Substrate-recognition component of the SCF (SKP1-CUL1-F-box protein)-type E3 ubiquitin ligase complex. This is F-box only protein 39 (FBXO39) from Bos taurus (Bovine).